Consider the following 749-residue polypeptide: Protein SWAP (749 aa).

Positions 8–124 are dry CEEERYL; it reads SNVHVQEYKD…RNDQRNAIGF (117 aa). A compositionally biased stretch (basic and acidic residues) spans 105–118; sequence EQEKEEEEKRRNDQ. Residues 105–149 are disordered; it reads EQEKEEEEKRRNDQRNAIGFDYGTGKVKARESDSEDEPFEPPEGI. The SURP motif 1 repeat unit spans residues 166–209; it reads IIEKTASFIVANGTQMEIVIKAKQRNNAEQFGFLEFDHRLNPFY. The tract at residues 256-310 is disordered; that stretch reads HGSDSEDSDSDYELHPSLLSGGAKRPVTPEKPGAIGPRKKPVEPEKPPDFTLKPV. The stretch at 391–431 is one SURP motif 2 repeat; sequence ILNSYAEHVAQRGLEAEASLAAREDLQLHFMEPKSPYYSYY. Over residues 458–478 the composition is skewed to low complexity; the sequence is PAPPSAVSSPGPSSLMSLNLS. Disordered regions lie at residues 458–498, 537–592, and 608–749; these read PAPP…SSRL, LRND…QVDR, and KAKK…DRRR. Positions 538–552 are enriched in basic and acidic residues; sequence RNDEPRDESSFRFDP. A compositionally biased stretch (polar residues) spans 560–569; that stretch reads PSDTTANFSD. Residues 574–583 show a composition bias toward pro residues; that stretch reads FPPPTPPVIP. 2 stretches are compositionally biased toward basic and acidic residues: residues 608–659 and 679–689; these read KAKK…RSLD and EEMKRTDEDRE. Basic residues-rich tracts occupy residues 690–704 and 714–749; these read RKRH…RRSR and EHKK…DRRR.

In terms of biological role, it is a regulator of pre-mRNA splicing (and, possibly, of other RNA processing events). It may regulate its own expression at the level of RNA processing. The sequence is that of Protein SWAP (swp-1) from Caenorhabditis elegans.